Reading from the N-terminus, the 273-residue chain is Thiazole synthase (273 aa).

Residue K110 is the Schiff-base intermediate with DXP of the active site. Residues G171, A197 to G198, and N219 to T220 contribute to the 1-deoxy-D-xylulose 5-phosphate site. Residues M251–P273 form a disordered region.

Belongs to the ThiG family. In terms of assembly, homotetramer. Forms heterodimers with either ThiH or ThiS.

It localises to the cytoplasm. The enzyme catalyses [ThiS sulfur-carrier protein]-C-terminal-Gly-aminoethanethioate + 2-iminoacetate + 1-deoxy-D-xylulose 5-phosphate = [ThiS sulfur-carrier protein]-C-terminal Gly-Gly + 2-[(2R,5Z)-2-carboxy-4-methylthiazol-5(2H)-ylidene]ethyl phosphate + 2 H2O + H(+). It participates in cofactor biosynthesis; thiamine diphosphate biosynthesis. Catalyzes the rearrangement of 1-deoxy-D-xylulose 5-phosphate (DXP) to produce the thiazole phosphate moiety of thiamine. Sulfur is provided by the thiocarboxylate moiety of the carrier protein ThiS. In vitro, sulfur can be provided by H(2)S. The protein is Thiazole synthase of Variovorax paradoxus (strain S110).